Reading from the N-terminus, the 62-residue chain is Large ribosomal subunit protein bL28 (62 aa).

It belongs to the bacterial ribosomal protein bL28 family.

This chain is Large ribosomal subunit protein bL28, found in Halalkalibacterium halodurans (strain ATCC BAA-125 / DSM 18197 / FERM 7344 / JCM 9153 / C-125) (Bacillus halodurans).